The following is a 68-amino-acid chain: uncharacterized protein (68 aa).

Transmembrane regions (helical) follow at residues 1–21 (MLFI…YFLP) and 28–48 (VHFS…LSSV).

It localises to the cell membrane. This is an uncharacterized protein from Haemophilus influenzae (strain ATCC 51907 / DSM 11121 / KW20 / Rd).